The sequence spans 309 residues: Homoserine kinase (309 aa).

91 to 101 serves as a coordination point for ATP; it reads PIGSGLGSSAC.

Belongs to the GHMP kinase family. Homoserine kinase subfamily.

It localises to the cytoplasm. The catalysed reaction is L-homoserine + ATP = O-phospho-L-homoserine + ADP + H(+). Its pathway is amino-acid biosynthesis; L-threonine biosynthesis; L-threonine from L-aspartate: step 4/5. Functionally, catalyzes the ATP-dependent phosphorylation of L-homoserine to L-homoserine phosphate. The polypeptide is Homoserine kinase (Yersinia pseudotuberculosis serotype O:1b (strain IP 31758)).